Consider the following 166-residue polypeptide: Large ribosomal subunit protein uL10 (166 aa).

The protein belongs to the universal ribosomal protein uL10 family. In terms of assembly, part of the ribosomal stalk of the 50S ribosomal subunit. The N-terminus interacts with L11 and the large rRNA to form the base of the stalk. The C-terminus forms an elongated spine to which L12 dimers bind in a sequential fashion forming a multimeric L10(L12)X complex.

Its function is as follows. Forms part of the ribosomal stalk, playing a central role in the interaction of the ribosome with GTP-bound translation factors. The polypeptide is Large ribosomal subunit protein uL10 (Pelagibacter ubique (strain HTCC1062)).